The primary structure comprises 307 residues: Fructose-bisphosphate aldolase (307 aa).

A D-glyceraldehyde 3-phosphate-binding site is contributed by serine 49. The active-site Proton donor is aspartate 82. Histidine 83, aspartate 104, glutamate 134, and histidine 180 together coordinate Zn(2+). Glycine 181 provides a ligand contact to dihydroxyacetone phosphate. Residue histidine 210 participates in Zn(2+) binding. Dihydroxyacetone phosphate-binding positions include 211-213 (GAS) and 253-256 (NTDT).

The protein belongs to the class II fructose-bisphosphate aldolase family. As to quaternary structure, homodimer. It depends on Zn(2+) as a cofactor.

The catalysed reaction is beta-D-fructose 1,6-bisphosphate = D-glyceraldehyde 3-phosphate + dihydroxyacetone phosphate. Its pathway is carbohydrate degradation; glycolysis; D-glyceraldehyde 3-phosphate and glycerone phosphate from D-glucose: step 4/4. Its function is as follows. Catalyzes the aldol condensation of dihydroxyacetone phosphate (DHAP or glycerone-phosphate) with glyceraldehyde 3-phosphate (G3P) to form fructose 1,6-bisphosphate (FBP) in gluconeogenesis and the reverse reaction in glycolysis. The chain is Fructose-bisphosphate aldolase (fba) from Helicobacter pylori (strain J99 / ATCC 700824) (Campylobacter pylori J99).